Reading from the N-terminus, the 488-residue chain is Glutamyl-tRNA(Gln) amidotransferase subunit A (488 aa).

Catalysis depends on charge relay system residues Lys-80 and Ser-155. Ser-179 (acyl-ester intermediate) is an active-site residue.

The protein belongs to the amidase family. GatA subfamily. As to quaternary structure, heterotrimer of A, B and C subunits.

It catalyses the reaction L-glutamyl-tRNA(Gln) + L-glutamine + ATP + H2O = L-glutaminyl-tRNA(Gln) + L-glutamate + ADP + phosphate + H(+). Functionally, allows the formation of correctly charged Gln-tRNA(Gln) through the transamidation of misacylated Glu-tRNA(Gln) in organisms which lack glutaminyl-tRNA synthetase. The reaction takes place in the presence of glutamine and ATP through an activated gamma-phospho-Glu-tRNA(Gln). This Chloroflexus aggregans (strain MD-66 / DSM 9485) protein is Glutamyl-tRNA(Gln) amidotransferase subunit A.